Consider the following 229-residue polypeptide: Large ribosomal subunit protein uL1 (229 aa).

The protein belongs to the universal ribosomal protein uL1 family. As to quaternary structure, part of the 50S ribosomal subunit.

In terms of biological role, binds directly to 23S rRNA. The L1 stalk is quite mobile in the ribosome, and is involved in E site tRNA release. Protein L1 is also a translational repressor protein, it controls the translation of the L11 operon by binding to its mRNA. This Histophilus somni (strain 129Pt) (Haemophilus somnus) protein is Large ribosomal subunit protein uL1.